We begin with the raw amino-acid sequence, 28 residues long: ARTQPGNIAPVGDFTLYPNAPRQGHIVA.

This sequence belongs to the ribosome-inactivating protein family.

The enzyme catalyses Endohydrolysis of the N-glycosidic bond at one specific adenosine on the 28S rRNA.. In terms of biological role, inhibits protein synthesis in animal cells. Does not possess ribonuclease activity. This is Ribosome-inactivating protein pleuturegin from Pleurotus tuber-regium (King tuber oyster mushroom).